The chain runs to 354 residues: Chorismate synthase (354 aa).

Arg-48 is a binding site for NADP(+). Residues 125–127 (RAS), Gly-277, 292–296 (KPIPS), and Arg-318 each bind FMN.

The protein belongs to the chorismate synthase family. Homotetramer. Requires FMNH2 as cofactor.

It carries out the reaction 5-O-(1-carboxyvinyl)-3-phosphoshikimate = chorismate + phosphate. It participates in metabolic intermediate biosynthesis; chorismate biosynthesis; chorismate from D-erythrose 4-phosphate and phosphoenolpyruvate: step 7/7. Functionally, catalyzes the anti-1,4-elimination of the C-3 phosphate and the C-6 proR hydrogen from 5-enolpyruvylshikimate-3-phosphate (EPSP) to yield chorismate, which is the branch point compound that serves as the starting substrate for the three terminal pathways of aromatic amino acid biosynthesis. This reaction introduces a second double bond into the aromatic ring system. The polypeptide is Chorismate synthase (Nitratidesulfovibrio vulgaris (strain DP4) (Desulfovibrio vulgaris)).